The chain runs to 167 residues: SsrA-binding protein (167 aa).

The disordered stretch occupies residues 139 to 167 (QAHDKRHAEKEREWQRDKQRIMRAHNRNA). The segment covering 144–158 (RHAEKEREWQRDKQR) has biased composition (basic and acidic residues).

This sequence belongs to the SmpB family.

The protein resides in the cytoplasm. Its function is as follows. Required for rescue of stalled ribosomes mediated by trans-translation. Binds to transfer-messenger RNA (tmRNA), required for stable association of tmRNA with ribosomes. tmRNA and SmpB together mimic tRNA shape, replacing the anticodon stem-loop with SmpB. tmRNA is encoded by the ssrA gene; the 2 termini fold to resemble tRNA(Ala) and it encodes a 'tag peptide', a short internal open reading frame. During trans-translation Ala-aminoacylated tmRNA acts like a tRNA, entering the A-site of stalled ribosomes, displacing the stalled mRNA. The ribosome then switches to translate the ORF on the tmRNA; the nascent peptide is terminated with the 'tag peptide' encoded by the tmRNA and targeted for degradation. The ribosome is freed to recommence translation, which seems to be the essential function of trans-translation. This Xylella fastidiosa (strain M23) protein is SsrA-binding protein.